The chain runs to 309 residues: Ribosomal RNA small subunit methyltransferase H (309 aa).

S-adenosyl-L-methionine-binding positions include 33-35 (GGH), Asp53, Phe79, Asp100, and Gln107.

Belongs to the methyltransferase superfamily. RsmH family.

The protein resides in the cytoplasm. The catalysed reaction is cytidine(1402) in 16S rRNA + S-adenosyl-L-methionine = N(4)-methylcytidine(1402) in 16S rRNA + S-adenosyl-L-homocysteine + H(+). Functionally, specifically methylates the N4 position of cytidine in position 1402 (C1402) of 16S rRNA. The protein is Ribosomal RNA small subunit methyltransferase H of Clostridium botulinum (strain Okra / Type B1).